A 265-amino-acid polypeptide reads, in one-letter code: MTDIQCVIFDWAGTIIDFGSLDPVLAFQSAFNAAGIQIDTDRIRQDMGIEKHEHIAKLAKMPEVQRAWFAKYKRGITDADQLQLFNYFEQFLLNRLSTETTLTPAVLQVQTYLKAHHIHIATTTGYTKAMLAIAAKQAGLLGYHPELMVSKEDVAAGRPAPDMINHIMTAFNITDPQTVVKVGDTVIDMQEGKNAGVLTVGLIESSSLLGLSQAKLIDLPQKTRLAKFAEITKTLKAAGADYVIHNLSELPAILAKYQTPQKEHA.

Asp10 (nucleophile) is an active-site residue. Mg(2+)-binding residues include Asp10 and Ala12. The active-site Schiff-base intermediate with substrate is Lys51. Asp184 contacts Mg(2+).

This sequence belongs to the HAD-like hydrolase superfamily. PhnX family. In terms of assembly, homodimer. Mg(2+) is required as a cofactor.

The enzyme catalyses phosphonoacetaldehyde + H2O = acetaldehyde + phosphate + H(+). Functionally, involved in phosphonate degradation. The chain is Phosphonoacetaldehyde hydrolase from Latilactobacillus sakei subsp. sakei (strain 23K) (Lactobacillus sakei subsp. sakei).